The sequence spans 699 residues: tRNA 5-methylaminomethyl-2-thiouridine biosynthesis bifunctional protein MnmC (699 aa).

Residues 1–247 (MPAVSRPLPP…KREMLCGEIA (247 aa)) are tRNA (mnm(5)s(2)U34)-methyltransferase. Residues 275–699 (IGAGLAGTSV…QPSPTTTETP (425 aa)) form an FAD-dependent cmnm(5)s(2)U34 oxidoreductase region. The segment at 675-699 (RGNATLSTSSPNDDAQPSPTTTETP) is disordered.

In the N-terminal section; belongs to the methyltransferase superfamily. tRNA (mnm(5)s(2)U34)-methyltransferase family. This sequence in the C-terminal section; belongs to the DAO family. FAD is required as a cofactor.

The protein localises to the cytoplasm. The enzyme catalyses 5-aminomethyl-2-thiouridine(34) in tRNA + S-adenosyl-L-methionine = 5-methylaminomethyl-2-thiouridine(34) in tRNA + S-adenosyl-L-homocysteine + H(+). Functionally, catalyzes the last two steps in the biosynthesis of 5-methylaminomethyl-2-thiouridine (mnm(5)s(2)U) at the wobble position (U34) in tRNA. Catalyzes the FAD-dependent demodification of cmnm(5)s(2)U34 to nm(5)s(2)U34, followed by the transfer of a methyl group from S-adenosyl-L-methionine to nm(5)s(2)U34, to form mnm(5)s(2)U34. This chain is tRNA 5-methylaminomethyl-2-thiouridine biosynthesis bifunctional protein MnmC, found in Chromohalobacter salexigens (strain ATCC BAA-138 / DSM 3043 / CIP 106854 / NCIMB 13768 / 1H11).